The following is a 337-amino-acid chain: uncharacterized protein (337 aa).

Residues 279–337 form the AFP-like domain; sequence SIVAKRNIKKGEYLSVDNISFKRPGRGIETKYLSIILNRKIKNDKEEDDIIYWDDLLGD.

To B.subtilis SpsE.

This is an uncharacterized protein from Methanocaldococcus jannaschii (strain ATCC 43067 / DSM 2661 / JAL-1 / JCM 10045 / NBRC 100440) (Methanococcus jannaschii).